A 216-amino-acid polypeptide reads, in one-letter code: Maintenance of carboxysome distribution protein A (216 aa).

ATP contacts are provided by G18, G19, G21, K22, T23, T24, and Q47. T23 provides a ligand contact to Mg(2+).

This sequence belongs to the ParA family. McdA subfamily. As to quaternary structure, homodimerizes in the presence of ATP. Each subunit binds 1 ATP molecule; some residues cross the dimer interface to contact ATP in the other subunit. Forms a complex with McdB.

The protein resides in the cytoplasm. It is found in the nucleoid. The enzyme catalyses ATP + H2O = ADP + phosphate + H(+). In terms of biological role, mcdA and McdB together mediate carboxysome (Cb) spacing, size, ultrastructure and probably inheritance in the cell, together they prevent Cb aggregation. McdA is an ATPase that forms dynamic gradients on the nucleoid in response to adapter protein McdB, which associates with carboxysomes. The interplay between McdA gradients on the nucleoid and McdB-bound carboxysomes result in the equal spacing of Cbs along the cell length. Functionally, incorrect positioning (aggregation) of carboxysomes results in reduced CO(2) fixation by encapsulated ribulose-1,5-bisphosphate carboxylase (RuBisCO, cbbL/cbbS), which leads to slower growth. This Gloeobacter kilaueensis (strain ATCC BAA-2537 / CCAP 1431/1 / ULC 316 / JS1) protein is Maintenance of carboxysome distribution protein A.